The sequence spans 235 residues: Exosome complex component Rrp4 (235 aa).

Residues 67-139 (GDVVIGLIQS…KTRSPLLTVQ (73 aa)) enclose the S1 motif domain. Residues 149–205 (GKIVEISPAKVPRVIGRKMSMLKTLEEKTECKIFVARNGRIHLECPNEDLEAIAVMA) form the KH domain.

Belongs to the RRP4 family. Component of the archaeal exosome complex. Forms a trimer of Rrp4 and/or Csl4 subunits. The trimer associates with a hexameric ring-like arrangement composed of 3 Rrp41-Rrp42 heterodimers.

The protein resides in the cytoplasm. Functionally, non-catalytic component of the exosome, which is a complex involved in RNA degradation. Increases the RNA binding and the efficiency of RNA degradation. Confers strong poly(A) specificity to the exosome. The polypeptide is Exosome complex component Rrp4 (Aeropyrum pernix (strain ATCC 700893 / DSM 11879 / JCM 9820 / NBRC 100138 / K1)).